A 309-amino-acid chain; its full sequence is Glutaminase (309 aa).

Residues S64, N114, E160, N167, Y191, Y243, and V261 each contribute to the substrate site.

The protein belongs to the glutaminase family. In terms of assembly, homotetramer.

It carries out the reaction L-glutamine + H2O = L-glutamate + NH4(+). This is Glutaminase from Rhizobium rhizogenes (strain K84 / ATCC BAA-868) (Agrobacterium radiobacter).